A 403-amino-acid polypeptide reads, in one-letter code: Tyrosine--tRNA ligase (403 aa).

The 'HIGH' region motif lies at 43 to 52 (PTAPDLHLGH). The 'KMSKS' region motif lies at 227 to 231 (KMSKS). Lys-230 lines the ATP pocket. Positions 338 to 399 (LPIAQLLKQT…GKRKFARVTI (62 aa)) constitute an S4 RNA-binding domain.

This sequence belongs to the class-I aminoacyl-tRNA synthetase family. TyrS type 2 subfamily. As to quaternary structure, homodimer.

It localises to the cytoplasm. It catalyses the reaction tRNA(Tyr) + L-tyrosine + ATP = L-tyrosyl-tRNA(Tyr) + AMP + diphosphate + H(+). In terms of biological role, catalyzes the attachment of tyrosine to tRNA(Tyr) in a two-step reaction: tyrosine is first activated by ATP to form Tyr-AMP and then transferred to the acceptor end of tRNA(Tyr). This chain is Tyrosine--tRNA ligase, found in Nitrosospira multiformis (strain ATCC 25196 / NCIMB 11849 / C 71).